Consider the following 98-residue polypeptide: Co-chaperonin GroES (98 aa).

This sequence belongs to the GroES chaperonin family. As to quaternary structure, heptamer of 7 subunits arranged in a ring. Interacts with the chaperonin GroEL.

The protein resides in the cytoplasm. Its function is as follows. Together with the chaperonin GroEL, plays an essential role in assisting protein folding. The GroEL-GroES system forms a nano-cage that allows encapsulation of the non-native substrate proteins and provides a physical environment optimized to promote and accelerate protein folding. GroES binds to the apical surface of the GroEL ring, thereby capping the opening of the GroEL channel. The protein is Co-chaperonin GroES of Agrobacterium fabrum (strain C58 / ATCC 33970) (Agrobacterium tumefaciens (strain C58)).